Reading from the N-terminus, the 439-residue chain is Iron-sulfur cluster assembly factor IBA57 homolog, mitochondrial (439 aa).

Residues 1–72 (MQPATRSIAV…RLISVSGPDA (72 aa)) constitute a mitochondrion transit peptide.

This sequence belongs to the GcvT family. CAF17/IBA57 subfamily.

The protein resides in the mitochondrion matrix. This is Iron-sulfur cluster assembly factor IBA57 homolog, mitochondrial (caf-17) from Neurospora crassa (strain ATCC 24698 / 74-OR23-1A / CBS 708.71 / DSM 1257 / FGSC 987).